We begin with the raw amino-acid sequence, 88 residues long: Large ribosomal subunit protein bL31B (88 aa).

The protein belongs to the bacterial ribosomal protein bL31 family. Type B subfamily. As to quaternary structure, part of the 50S ribosomal subunit.

This chain is Large ribosomal subunit protein bL31B, found in Paraburkholderia phytofirmans (strain DSM 17436 / LMG 22146 / PsJN) (Burkholderia phytofirmans).